A 1264-amino-acid polypeptide reads, in one-letter code: Ubiquitin carboxyl-terminal hydrolase usp-48 (1264 aa).

One can recognise a USP domain in the interval 108 to 430 (AGLINGGNFC…ACYGLLYRRR (323 aa)). Residue cysteine 117 is the Nucleophile of the active site. The active-site Proton acceptor is histidine 366. 3 disordered regions span residues 390–415 (IPKPPGTEKPTTAKTEKSRKKDKEKY), 522–610 (AKGE…IMDT), and 630–679 (TVEV…PVSS). Basic and acidic residues-rich tracts occupy residues 403–415 (KTEKSRKKDKEKY) and 532–543 (EASENEEKKKNE). Residues 516–547 (AQEYEVAKGEKKKKKKEASENEEKKKNEEDEA) adopt a coiled-coil conformation. Residues 565-575 (SEPSTSAAATE) are compositionally biased toward low complexity. Polar residues-rich tracts occupy residues 587 to 599 (ETPNPENAESTQV) and 663 to 678 (NGTNGTNSSPQKQPVS).

This sequence belongs to the peptidase C19 family. Broadly expressed. Expressed in germline.

It localises to the nucleus. The protein resides in the chromosome. It carries out the reaction Thiol-dependent hydrolysis of ester, thioester, amide, peptide and isopeptide bonds formed by the C-terminal Gly of ubiquitin (a 76-residue protein attached to proteins as an intracellular targeting signal).. Functionally, recognizes and hydrolyzes the peptide bond at the C-terminal Gly of ubiquitin. Involved in the processing of poly-ubiquitin precursors as well as that of ubiquitinated proteins. Required post-developmentally to restrict the plasticity of epidermal cells, probably by regulating gene expression. This Caenorhabditis elegans protein is Ubiquitin carboxyl-terminal hydrolase usp-48.